The sequence spans 1182 residues: Rho GTPase-activating protein 20 (1182 aa).

The disordered stretch occupies residues 1 to 40 (MEAMSPQQDALGAQPGRSSSLTGMSRIAGGPGTKKKMKTL). Ser46 carries the post-translational modification Phosphoserine. Residues 85 to 185 (TLLIDGPVEL…WLSLLQRYIA (101 aa)) enclose the PH domain. Residues 194 to 283 (KSIPLKIFAK…TALLTQGSRD (90 aa)) enclose the Ras-associating domain. The region spanning 365 to 551 (VSLPDLCEND…FLIENCCRVF (187 aa)) is the Rho-GAP domain. Phosphoserine is present on residues Ser704 and Ser730. 6 disordered regions span residues 745-772 (QTQP…KRNT), 803-839 (VASY…QKSS), 935-955 (SYSS…SSQD), 982-1011 (TQRK…GQAS), 1074-1101 (LPSC…EGPG), and 1142-1182 (SGGQ…GTDI). Positions 758 to 772 (KQSSVTGTDVSKRNT) are enriched in polar residues. The segment covering 811–824 (SQDHPRKQAFDADP) has biased composition (basic and acidic residues).

GTPase activator for the Rho-type GTPases by converting them to an inactive GDP-bound state. This Mus musculus (Mouse) protein is Rho GTPase-activating protein 20 (Arhgap20).